The chain runs to 5400 residues: Midasin (5400 aa).

6 AAA-ATPase protomer regions span residues 345–571, 656–986, 1050–1308, 1347–1652, 1769–2023, and 2074–2347; these read MVSL…HGLP, LLEK…AIKA, SYVK…EKVV, SMRR…VNMA, VLRV…VLRI, and IRQN…MMGP. ATP contacts are provided by residues 360-367, 674-681, 1079-1086, 1369-1376, 1786-1793, and 2095-2102; these read GPSGSGKS, GETGTGKT, GPTSSGKT, GDTGGGKT, GSPGVGKT, and GPSSSGKT. The tract at residues 2435–4569 is linker; sequence IYLSSLGVTD…DGVGAKDVSD (2135 aa). Coiled coils occupy residues 2896 to 2916, 3233 to 3253, and 3896 to 3916; these read LERL…SEID, AMKI…LELN, and MEQL…VLKL. Disordered stretches follow at residues 4540-4890, 4905-4929, and 4990-5069; these read EEDD…SSSN, TLTD…TKVN, and QVNT…RMDS. Basic and acidic residues predominate over residues 4576–4612; that stretch reads QLHGTDKKEEEEKEQDDVLGKNKGIEMSDEFDGKEYS. Residues 4613-4631 show a composition bias toward acidic residues; it reads VSEDEEEDKEDEGSEDEPL. Basic and acidic residues-rich tracts occupy residues 4641–4652 and 4661–4687; these read DAEKADEKPWNK and MNEK…KDDG. Acidic residues-rich tracts occupy residues 4688 to 4698 and 4706 to 4721; these read VETADEPEESN and GNDE…DTDN. Over residues 4722-4732 the composition is skewed to basic and acidic residues; sequence LEEKIQTKEEA. Residues 4740 to 4750 are compositionally biased toward acidic residues; sequence VDNEQIDDDME. A compositionally biased stretch (basic and acidic residues) spans 4751 to 4762; the sequence is MDKTEEVEKEDA. Residues 4779 to 4798 are compositionally biased toward acidic residues; that stretch reads GENDQEETQEPSEENMEAEA. Residues 4799 to 4810 are compositionally biased toward basic and acidic residues; it reads EDRCGSPQKEEP. A compositionally biased stretch (acidic residues) spans 4811–4822; sequence GNDLEQEPETEP. Residues 4823-4834 show a composition bias toward basic and acidic residues; sequence IEGKEVMSEDMM. Polar residues-rich tracts occupy residues 4839-4855, 4864-4874, 4916-4928, and 5030-5040; these read RNDN…NPHG, TAPQENLSATD, PQNQ…QTKV, and SKPSISNSIAE. Residues 5157–5164 carry the Nuclear localization signal motif; it reads MKKVIPYI. The region spanning 5186 to 5387 is the VWFA domain; the sequence is QVVIAVDDSR…EALPRTLGDV (202 aa). The stretch at 5271–5291 forms a coiled coil; that stretch reads VVNLLRNMNEMLENLASTRRQ.

This sequence belongs to the midasin family. Associates with pre-60S ribosomes in the nucleoplasm. In terms of tissue distribution, constitutively and ubiquitously expressed. Mostly observed in the shoot apex and root tip, and, to a lower extent, in mature seeds, seedling (excluding the hypocotyl), roots, stems, leaves and flowers.

Its subcellular location is the nucleus. It is found in the nucleolus. The protein localises to the nucleoplasm. Its function is as follows. Nuclear chaperone required for maturation and nuclear export of pre-60S ribosome subunits. Functions at successive maturation steps to remove ribosomal factors at critical transition points, first driving the exit of early pre-60S particles from the nucleolus and then driving late pre-60S particles from the nucleus. Required for female gametophyte development. Involved in the expression regulation of genes related to plant growth and development. This chain is Midasin, found in Arabidopsis thaliana (Mouse-ear cress).